A 226-amino-acid polypeptide reads, in one-letter code: MSTVLVVGADKGIAHSISRQLHDRGEDVIAACLFDGADLAAAGITVEPGVDVTSQESVEALAARLSEKGVKLDAVFHVAGVMWLDEVGSLDYDLIRRQIEINTLGPLRTIEAVRPLLNEGAKVGIVTSRVGSLGDNTSGGMYSYRISKAAANMVGLNFHHDLSKDGVSVLLLHPGMVATDLTKDFPGEHSYITPEQAAAGLIKNIDNLTPETSGRFQHSDGTFLQW.

The protein belongs to the short-chain dehydrogenases/reductases (SDR) family.

The enzyme catalyses 2-glutathionyl-2-methylbut-3-en-1-ol + 2 NAD(+) + H2O = 2-glutathionyl-2-methylbut-3-enoate + 2 NADH + 3 H(+). It carries out the reaction 2-glutathionyl-2-methylbut-3-en-1-ol + NAD(+) = 2-glutathionyl-2-methylbut-3-enal + NADH + H(+). The catalysed reaction is 2-glutathionyl-2-methylbut-3-enal + NAD(+) + H2O = 2-glutathionyl-2-methylbut-3-enoate + NADH + 2 H(+). Involved in isoprene degradation. Catalyzes the two-step NAD(+)-dependent oxidation of 2-glutathionyl-2-methylbut-3-en-1-ol (HGMB) to 2-glutathionyl-2-methylbut-3-enoate (GMBA). This is 1-hydroxy-2-glutathionyl-2-methyl-3-butene dehydrogenase from Rhodococcus sp. (strain AD45).